The primary structure comprises 244 residues: 1-(5-phosphoribosyl)-5-[(5-phosphoribosylamino)methylideneamino] imidazole-4-carboxamide isomerase (244 aa).

D8 functions as the Proton acceptor in the catalytic mechanism. Residue D129 is the Proton donor of the active site.

The protein belongs to the HisA/HisF family.

The protein resides in the cytoplasm. The enzyme catalyses 1-(5-phospho-beta-D-ribosyl)-5-[(5-phospho-beta-D-ribosylamino)methylideneamino]imidazole-4-carboxamide = 5-[(5-phospho-1-deoxy-D-ribulos-1-ylimino)methylamino]-1-(5-phospho-beta-D-ribosyl)imidazole-4-carboxamide. The protein operates within amino-acid biosynthesis; L-histidine biosynthesis; L-histidine from 5-phospho-alpha-D-ribose 1-diphosphate: step 4/9. In Geobacter sulfurreducens (strain ATCC 51573 / DSM 12127 / PCA), this protein is 1-(5-phosphoribosyl)-5-[(5-phosphoribosylamino)methylideneamino] imidazole-4-carboxamide isomerase.